We begin with the raw amino-acid sequence, 98 residues long: uncharacterized protein (98 aa).

Residues 1–63 are disordered; sequence MPRDKKLVHR…NGHSQPAIVA (63 aa). Positions 14 to 29 are enriched in acidic residues; it reads DVEDEDNDQREEEWSD. The span at 48-57 shows a compositional bias: polar residues; that stretch reads EPSSASNGHS.

This is an uncharacterized protein from Aedes vexans (Inland floodwater mosquito).